We begin with the raw amino-acid sequence, 625 residues long: DNA-directed RNA polymerase subunit gamma (625 aa).

Residues cysteine 71, cysteine 73, cysteine 86, and cysteine 89 each coordinate Zn(2+). 3 residues coordinate Mg(2+): aspartate 467, aspartate 469, and aspartate 471.

This sequence belongs to the RNA polymerase beta' chain family. RpoC1 subfamily. As to quaternary structure, in cyanobacteria the RNAP catalytic core is composed of 2 alpha, 1 beta, 1 beta', 1 gamma and 1 omega subunit. When a sigma factor is associated with the core the holoenzyme is formed, which can initiate transcription. Mg(2+) is required as a cofactor. Requires Zn(2+) as cofactor.

It catalyses the reaction RNA(n) + a ribonucleoside 5'-triphosphate = RNA(n+1) + diphosphate. In terms of biological role, DNA-dependent RNA polymerase catalyzes the transcription of DNA into RNA using the four ribonucleoside triphosphates as substrates. The polypeptide is DNA-directed RNA polymerase subunit gamma (Gloeothece citriformis (strain PCC 7424) (Cyanothece sp. (strain PCC 7424))).